A 395-amino-acid polypeptide reads, in one-letter code: S-adenosylmethionine synthase (395 aa).

Residue His-18 participates in ATP binding. Asp-20 contacts Mg(2+). Glu-46 provides a ligand contact to K(+). 2 residues coordinate L-methionine: Glu-59 and Gln-103. The interval 103–113 (QSADIAVGVDS) is flexible loop. Residues 170–172 (DAK), Asp-244, 250–251 (RK), Ala-267, and Lys-271 each bind ATP. Asp-244 is an L-methionine binding site. Lys-275 is a binding site for L-methionine.

Belongs to the AdoMet synthase family. As to quaternary structure, homotetramer; dimer of dimers. Mg(2+) serves as cofactor. Requires K(+) as cofactor.

It is found in the cytoplasm. The enzyme catalyses L-methionine + ATP + H2O = S-adenosyl-L-methionine + phosphate + diphosphate. It functions in the pathway amino-acid biosynthesis; S-adenosyl-L-methionine biosynthesis; S-adenosyl-L-methionine from L-methionine: step 1/1. In terms of biological role, catalyzes the formation of S-adenosylmethionine (AdoMet) from methionine and ATP. The overall synthetic reaction is composed of two sequential steps, AdoMet formation and the subsequent tripolyphosphate hydrolysis which occurs prior to release of AdoMet from the enzyme. This chain is S-adenosylmethionine synthase, found in Gluconacetobacter diazotrophicus (strain ATCC 49037 / DSM 5601 / CCUG 37298 / CIP 103539 / LMG 7603 / PAl5).